A 356-amino-acid chain; its full sequence is AT-hook motif nuclear-localized protein 1 (356 aa).

The segment at 1–127 (MVLNMESTGE…PSHLPPPSSH (127 aa)) is disordered. A compositionally biased stretch (pro residues) spans 49 to 66 (VTPPPPQPSSHHTAPPPL). The segment covering 88-97 (MKKKRGRPRK) has biased composition (basic residues). A Bipartite nuclear localization signal motif is present at residues 89–97 (KKKRGRPRK). A DNA-binding region (a.T hook) is located at residues 89–101 (KKKRGRPRKYGPD). Low complexity predominate over residues 106–118 (ALSPKPISSAPAP). Residues 167–309 (GGNFTPHIIT…KHDFMLSSPT (143 aa)) form the PPC domain. Residues 270–287 (GLLVAASPVQVVVGSFLA) are required for nuclear localization. A Nuclear localization signal motif is present at residues 295–302 (KPKKNKHD).

The protein resides in the nucleus. Its subcellular location is the nucleoplasm. It localises to the chromosome. Functionally, transcription factor that specifically binds AT-rich DNA sequences related to the nuclear matrix attachment regions (MARs). May play a function in the positioning of chromatin fibers within the nucleus. This Arabidopsis thaliana (Mouse-ear cress) protein is AT-hook motif nuclear-localized protein 1.